The following is a 339-amino-acid chain: Ectoine/5-hydroxyectoine-binding periplasmic protein UehA (339 aa).

Residues 1–20 (MAQSITFTFGAVAAAGIALA) form the signal peptide. The L-ectoine site is built by glutamate 36, arginine 171, asparagine 211, phenylalanine 215, and phenylalanine 236. A disulfide bond links cysteine 162 and cysteine 303.

The protein belongs to the bacterial solute-binding protein 7 family. As to quaternary structure, monomer. The complex comprises the extracytoplasmic solute receptor protein UehA, and the two transmembrane proteins UehB and UehC.

The protein localises to the periplasm. In terms of biological role, part of the tripartite ATP-independent periplasmic (TRAP) transport system UehABC, which imports both ectoine and 5-hydroxyectoine as nutrients, and not as osmoprotectants. UehA binds both ectoine and 5-hydroxyectoine with high specificity and affinity. The protein is Ectoine/5-hydroxyectoine-binding periplasmic protein UehA of Ruegeria pomeroyi (strain ATCC 700808 / DSM 15171 / DSS-3) (Silicibacter pomeroyi).